The chain runs to 191 residues: MSKRNKELLEIGRDIGGDEAVEIIKALEKKGEATDEELAEITGIRVNTVRKILYALYDAKLADFRRVKDDETGWYYYYWHIETKRLPEIIRARKMQELEKLKKMLQEETSEVYYHCGNPDHPKLTFDEAFEYGFVCPICGEILHQYDNSAVIEELKKRIEELEIELGLRAPPKKEKKGKKSKKRSKKSKKK.

The HTH TFE/IIEalpha-type domain occupies 4–87; that stretch reads RNKELLEIGR…YWHIETKRLP (84 aa). A disordered region spans residues 170–191; sequence APPKKEKKGKKSKKRSKKSKKK. Residues 174–191 show a composition bias toward basic residues; that stretch reads KEKKGKKSKKRSKKSKKK.

Belongs to the TFE family. In terms of assembly, monomer. Interaction with RNA polymerase subunits RpoF and RpoE is necessary for Tfe stimulatory transcription activity. Able to interact with Tbp and RNA polymerase in the absence of DNA promoter. Interacts both with the preinitiation and elongation complexes.

In terms of biological role, transcription factor that plays a role in the activation of archaeal genes transcribed by RNA polymerase. Facilitates transcription initiation by enhancing TATA-box recognition by TATA-box-binding protein (Tbp), and transcription factor B (Tfb) and RNA polymerase recruitment. Not absolutely required for transcription in vitro, but particularly important in cases where Tbp or Tfb function is not optimal. It dynamically alters the nucleic acid-binding properties of RNA polymerases by stabilizing the initiation complex and destabilizing elongation complexes. Seems to translocate with the RNA polymerase following initiation and acts by binding to the non template strand of the transcription bubble in elongation complexes. This Pyrococcus horikoshii (strain ATCC 700860 / DSM 12428 / JCM 9974 / NBRC 100139 / OT-3) protein is Transcription factor E.